Consider the following 327-residue polypeptide: Movement protein (327 aa).

Residues 297–327 (SASSSNTENELARVSQNIDLLKNKLKEICGE) adopt a coiled-coil conformation.

It belongs to the caulimoviridae movement protein family. As to quaternary structure, homotrimer, through the coiled-coil domain. Interacts with VAP. May interact (via N-terminus) with host prenylated Rab acceptor protein 1D (PRA1D).

It is found in the host cell junction. The protein resides in the host plasmodesma. In terms of biological role, transports viral genome to neighboring plant cells directly through plasmosdesmata, without any budding. The movement protein allows efficient cell to cell propagation, by bypassing the host cell wall barrier. Acts by forming tubules structures that increase the size exclusion limit (SEL) of plasmodesmata, thereby allowing viral ribonucleocapsids to spread directly to neighboring cells. The chain is Movement protein from Arabidopsis thaliana (Mouse-ear cress).